The following is a 96-amino-acid chain: MSRSCELTGKGVQSGNNVSHANNKTKRKFLPNLCNVTLISDALGQRFRLRVSAAALRSVEHRGGLDAFLLKADENELSMRARLLRRQIVKKAAEAA.

Residues 1 to 22 (MSRSCELTGKGVQSGNNVSHAN) are compositionally biased toward polar residues. Residues 1-24 (MSRSCELTGKGVQSGNNVSHANNK) are disordered.

This sequence belongs to the bacterial ribosomal protein bL28 family.

The protein is Large ribosomal subunit protein bL28 of Rhizobium meliloti (strain 1021) (Ensifer meliloti).